The following is an 81-amino-acid chain: Large ribosomal subunit protein bL27 (81 aa).

The tract at residues 1–22 is disordered; it reads MAHKKGQGSSRNGRDSNAQRRG.

The protein belongs to the bacterial ribosomal protein bL27 family.

This chain is Large ribosomal subunit protein bL27, found in Rhodopirellula baltica (strain DSM 10527 / NCIMB 13988 / SH1).